Consider the following 199-residue polypeptide: Transgelin-3 (199 aa).

In terms of domain architecture, Calponin-homology (CH) spans 24-136 (ADLENKLVDW…RTLMALGSVA (113 aa)). Serine 163 carries the post-translational modification Phosphoserine. The stretch at 174–199 (IGLQMGSNKGASQAGMTGYGMPRQIM) is one Calponin-like repeat. Positions 176-188 (LQMGSNKGASQAG) are enriched in polar residues. Positions 176-199 (LQMGSNKGASQAGMTGYGMPRQIM) are disordered.

The protein belongs to the calponin family. Widely expressed in the brain. Expression is increased in the superior frontal cortex of alcoholics, but not in the motor cortex or cerebellum.

The chain is Transgelin-3 (TAGLN3) from Homo sapiens (Human).